The sequence spans 682 residues: Potassium-transporting ATPase ATP-binding subunit (682 aa).

Transmembrane regions (helical) follow at residues 34–54 (PVMF…IAMA), 62–82 (ALFS…ANFA), 219–239 (IALT…TATL), and 254–274 (VLVA…LSAI). Residue Asp-307 is the 4-aspartylphosphate intermediate of the active site. ATP contacts are provided by residues Asp-344, Glu-348, 377 to 384 (FTAQSRMS), and Lys-395. Mg(2+)-binding residues include Asp-518 and Asp-522. 3 helical membrane-spanning segments follow: residues 588–608 (FAII…LNIM), 616–636 (AILS…PLAL), and 656–676 (IYGL…DLLL).

It belongs to the cation transport ATPase (P-type) (TC 3.A.3) family. Type IA subfamily. The system is composed of three essential subunits: KdpA, KdpB and KdpC.

The protein localises to the cell inner membrane. It catalyses the reaction K(+)(out) + ATP + H2O = K(+)(in) + ADP + phosphate + H(+). Its function is as follows. Part of the high-affinity ATP-driven potassium transport (or Kdp) system, which catalyzes the hydrolysis of ATP coupled with the electrogenic transport of potassium into the cytoplasm. This subunit is responsible for energy coupling to the transport system and for the release of the potassium ions to the cytoplasm. In Escherichia coli O17:K52:H18 (strain UMN026 / ExPEC), this protein is Potassium-transporting ATPase ATP-binding subunit.